Here is a 429-residue protein sequence, read N- to C-terminus: Gamma-glutamyl phosphate reductase (429 aa).

Belongs to the gamma-glutamyl phosphate reductase family.

It is found in the cytoplasm. The catalysed reaction is L-glutamate 5-semialdehyde + phosphate + NADP(+) = L-glutamyl 5-phosphate + NADPH + H(+). The protein operates within amino-acid biosynthesis; L-proline biosynthesis; L-glutamate 5-semialdehyde from L-glutamate: step 2/2. In terms of biological role, catalyzes the NADPH-dependent reduction of L-glutamate 5-phosphate into L-glutamate 5-semialdehyde and phosphate. The product spontaneously undergoes cyclization to form 1-pyrroline-5-carboxylate. The sequence is that of Gamma-glutamyl phosphate reductase from Methylibium petroleiphilum (strain ATCC BAA-1232 / LMG 22953 / PM1).